The sequence spans 87 residues: uncharacterized protein (87 aa).

This sequence belongs to the YlmC/YmxH family.

This is an uncharacterized protein from Clostridium acetobutylicum (strain ATCC 824 / DSM 792 / JCM 1419 / IAM 19013 / LMG 5710 / NBRC 13948 / NRRL B-527 / VKM B-1787 / 2291 / W).